We begin with the raw amino-acid sequence, 267 residues long: 4-hydroxy-tetrahydrodipicolinate reductase (267 aa).

NAD(+) is bound at residue 10–15 (GAGGKM). R38 contributes to the NADP(+) binding site. NAD(+) is bound by residues 100–102 (GTT) and 126–129 (APNF). H156 functions as the Proton donor/acceptor in the catalytic mechanism. Position 157 (H157) interacts with (S)-2,3,4,5-tetrahydrodipicolinate. K160 functions as the Proton donor in the catalytic mechanism. 166-167 (GT) lines the (S)-2,3,4,5-tetrahydrodipicolinate pocket.

This sequence belongs to the DapB family.

The protein resides in the cytoplasm. It carries out the reaction (S)-2,3,4,5-tetrahydrodipicolinate + NAD(+) + H2O = (2S,4S)-4-hydroxy-2,3,4,5-tetrahydrodipicolinate + NADH + H(+). It catalyses the reaction (S)-2,3,4,5-tetrahydrodipicolinate + NADP(+) + H2O = (2S,4S)-4-hydroxy-2,3,4,5-tetrahydrodipicolinate + NADPH + H(+). The protein operates within amino-acid biosynthesis; L-lysine biosynthesis via DAP pathway; (S)-tetrahydrodipicolinate from L-aspartate: step 4/4. Its function is as follows. Catalyzes the conversion of 4-hydroxy-tetrahydrodipicolinate (HTPA) to tetrahydrodipicolinate. In Desulfitobacterium hafniense (strain DSM 10664 / DCB-2), this protein is 4-hydroxy-tetrahydrodipicolinate reductase.